Consider the following 92-residue polypeptide: uncharacterized protein (92 aa).

This is an uncharacterized protein from Methanocaldococcus jannaschii (strain ATCC 43067 / DSM 2661 / JAL-1 / JCM 10045 / NBRC 100440) (Methanococcus jannaschii).